The following is a 96-amino-acid chain: Co-chaperonin GroES (96 aa).

Belongs to the GroES chaperonin family. In terms of assembly, heptamer of 7 subunits arranged in a ring. Interacts with the chaperonin GroEL.

Its subcellular location is the cytoplasm. In terms of biological role, together with the chaperonin GroEL, plays an essential role in assisting protein folding. The GroEL-GroES system forms a nano-cage that allows encapsulation of the non-native substrate proteins and provides a physical environment optimized to promote and accelerate protein folding. GroES binds to the apical surface of the GroEL ring, thereby capping the opening of the GroEL channel. This Legionella pneumophila (strain Paris) protein is Co-chaperonin GroES.